Reading from the N-terminus, the 123-residue chain is Large ribosomal subunit protein bL12 (123 aa).

This sequence belongs to the bacterial ribosomal protein bL12 family. In terms of assembly, homodimer. Part of the ribosomal stalk of the 50S ribosomal subunit. Forms a multimeric L10(L12)X complex, where L10 forms an elongated spine to which 2 to 4 L12 dimers bind in a sequential fashion. Binds GTP-bound translation factors.

Its function is as follows. Forms part of the ribosomal stalk which helps the ribosome interact with GTP-bound translation factors. Is thus essential for accurate translation. The sequence is that of Large ribosomal subunit protein bL12 from Shewanella amazonensis (strain ATCC BAA-1098 / SB2B).